Consider the following 325-residue polypeptide: Aldo-keto reductase family 1 member A1 (325 aa).

Residue alanine 2 is modified to N-acetylalanine. Serine 4 is modified (phosphoserine). Residues 11-20 (GQKMPLIGLG), threonine 21, and tryptophan 22 contribute to the NADP(+) site. The residue at position 38 (serine 38) is a Phosphoserine. Aspartate 45 provides a ligand contact to NADP(+). The active-site Proton donor is the tyrosine 50. Position 127 is an N6-acetyllysine; alternate (lysine 127). Lysine 127 carries the N6-succinyllysine; alternate modification. Serine 162, asparagine 163, serine 211, leucine 213, serine 215, serine 216, lysine 263, serine 264, valine 265, threonine 266, arginine 269, and asparagine 273 together coordinate NADP(+). Phosphoserine is present on serine 211.

The protein belongs to the aldo/keto reductase family. As to quaternary structure, monomer.

The protein resides in the cytoplasm. The protein localises to the cytosol. It is found in the apical cell membrane. It carries out the reaction a primary alcohol + NADP(+) = an aldehyde + NADPH + H(+). The enzyme catalyses L-gulonate + NADP(+) = aldehydo-D-glucuronate + NADPH + H(+). The catalysed reaction is L-gulono-1,4-lactone + NADP(+) = D-glucurono-3,6-lactone + NADPH + H(+). It catalyses the reaction allyl alcohol + NADP(+) = acrolein + NADPH + H(+). It carries out the reaction glycerol + NADP(+) = D-glyceraldehyde + NADPH + H(+). The enzyme catalyses glycerol + NADP(+) = L-glyceraldehyde + NADPH + H(+). The catalysed reaction is hydroxyacetone + NADP(+) = methylglyoxal + NADPH + H(+). It catalyses the reaction 3-deoxyfructose + NADP(+) = 3-deoxyglucosone + NADPH + H(+). It carries out the reaction (R)-mevalonate + NADP(+) = (R)-mevaldate + NADPH + H(+). The enzyme catalyses pyridine 3-methanol + NADP(+) = pyridine-3-carbaldehyde + NADPH + H(+). The catalysed reaction is S-nitroso-CoA + NADPH + H(+) = sulfinamide-CoA + NADP(+). It catalyses the reaction S-nitrosoglutathione + NADPH + H(+) = S-(hydroxysulfenamide)glutathione + NADP(+). Its function is as follows. Catalyzes the NADPH-dependent reduction of a wide variety of carbonyl-containing compounds to their corresponding alcohols. Displays enzymatic activity towards endogenous metabolites such as aromatic and aliphatic aldehydes, ketones, monosaccharides and bile acids, with a preference for negatively charged substrates, such as glucuronate and succinic semialdehyde. Plays an important role in ascorbic acid biosynthesis by catalyzing the reduction of D-glucuronic acid and D-glucurono-gamma-lactone. Functions as a detoxifiying enzyme by reducing a range of toxic aldehydes. Reduces methylglyoxal and 3-deoxyglucosone, which are present at elevated levels under hyperglycemic conditions and are cytotoxic. Involved also in the detoxification of lipid-derived aldehydes like acrolein. Plays a role in the activation of procarcinogens, such as polycyclic aromatic hydrocarbon trans-dihydrodiols, and in the metabolism of various xenobiotics and drugs. Also acts as an inhibitor of protein S-nitrosylation by mediating degradation of S-nitroso-coenzyme A (S-nitroso-CoA), a cofactor required to S-nitrosylate proteins. S-nitroso-CoA reductase activity is involved in reprogramming intermediary metabolism in renal proximal tubules, notably by inhibiting protein S-nitrosylation of isoform 2 of PKM (PKM2). Also acts as a S-nitroso-glutathione reductase by catalyzing the NADPH-dependent reduction of S-nitrosoglutathione. Displays no reductase activity towards retinoids. In Bos taurus (Bovine), this protein is Aldo-keto reductase family 1 member A1.